The primary structure comprises 630 residues: Alpha-1,3-mannosyltransferase MNT3 (630 aa).

Residues Met1–Arg14 are Cytoplasmic-facing. A helical; Signal-anchor for type II membrane protein transmembrane segment spans residues Leu15–Ala31. At Ser32–Asn630 the chain is on the lumenal side. N-linked (GlcNAc...) asparagine glycosylation is found at Asn34 and Asn168.

It belongs to the MNN1/MNT family.

Its subcellular location is the golgi apparatus membrane. It functions in the pathway protein modification; protein glycosylation. In terms of biological role, mannosyltransferase involved in adding the 4th and 5th mannose residues of O-linked glycans. This is Alpha-1,3-mannosyltransferase MNT3 (MNT3) from Saccharomyces cerevisiae (strain ATCC 204508 / S288c) (Baker's yeast).